Consider the following 524-residue polypeptide: Serine/threonine-protein kinase PAK 2 (524 aa).

Residues 1–81 (MSDNGELEDK…PEISPPSDFE (81 aa)) form a disordered region. Residue serine 2 is modified to N-acetylserine. Phosphoserine is present on residues serine 2, serine 20, serine 55, and serine 58. Threonine 60 bears the Phosphothreonine mark. N6-acetyllysine is present on lysine 62. At serine 64 the chain carries Phosphoserine. The span at 67–81 (KEKERPEISPPSDFE) shows a compositional bias: basic and acidic residues. Residues 69 to 112 (KERPEISPPSDFEHTIHVGFDAVTGEFTGMPEQWARLLQTSNIT) are GTPase-binding. The tract at residues 69–137 (KERPEISPPS…KFYDSNTVKQ (69 aa)) is autoregulatory region. Residues 74 to 87 (ISPPSDFEHTIHVG) enclose the CRIB domain. Residues 88–248 (FDAVTGEFTG…IVSIGDPKKK (161 aa)) form a linker region. Lysine 128 bears the N6-acetyllysine mark. Threonine 134 is modified (phosphothreonine). Tyrosine 139 is modified (phosphotyrosine). Residue serine 141 is modified to Phosphoserine. Residue threonine 143 is modified to Phosphothreonine. At serine 152 the chain carries Phosphoserine. Residues threonine 159 and threonine 169 each carry the phosphothreonine modification. A compositionally biased stretch (acidic residues) spans 169-178 (TEEDDDDEEA). Positions 169–188 (TEEDDDDEEAAPPVIAPRPD) are disordered. The residue at position 197 (serine 197) is a Phosphoserine. The disordered stretch occupies residues 204–228 (APVGDSHVDSGAKSSDKQKKKTKMT). Basic and acidic residues predominate over residues 209–228 (SHVDSGAKSSDKQKKKTKMT). Positions 245 to 251 (PKKKYTR) match the Nuclear localization signal motif. The 252-residue stretch at 249-500 (YTRYEKIGQG…AKELLQHPFL (252 aa)) folds into the Protein kinase domain. Residues 255-263 (IGQGASGTV) and lysine 278 each bind ATP. The active-site Proton acceptor is the aspartate 368. Threonine 402 carries the phosphothreonine; by autocatalysis modification.

As to quaternary structure, interacts tightly with GTP-bound but not GDP-bound CDC42/p21 and RAC1. Interacts with SH3MD4. Interacts with SCRIB. Interacts with ARHGEF7 and GIT1. PAK-2p34 interacts with ARHGAP10. Interacts with RAC1. In terms of processing, full-length PAK2 is autophosphorylated when activated by CDC42/p21. Following cleavage, both peptides, PAK-2p27 and PAK-2p34, become highly autophosphorylated. Autophosphorylation of PAK-2p27 can occur in the absence of any effectors and is dependent on phosphorylation of Thr-402, because PAK-2p27 is acting as an exogenous substrate. During apoptosis proteolytically cleaved by caspase-3 or caspase-3-like proteases to yield active PAK-2p34. Post-translationally, ubiquitinated, leading to its proteasomal degradation.

The protein resides in the cytoplasm. It localises to the nucleus. Its subcellular location is the perinuclear region. It is found in the membrane. It carries out the reaction L-seryl-[protein] + ATP = O-phospho-L-seryl-[protein] + ADP + H(+). It catalyses the reaction L-threonyl-[protein] + ATP = O-phospho-L-threonyl-[protein] + ADP + H(+). With respect to regulation, activated by binding small G proteins. Binding of GTP-bound CDC42 or RAC1 to the autoregulatory region releases monomers from the autoinhibited dimer, enables phosphorylation of Thr-402 and allows the kinase domain to adopt an active structure. Following caspase cleavage, autophosphorylated PAK-2p34 is constitutively active. Functionally, serine/threonine protein kinase that plays a role in a variety of different signaling pathways including cytoskeleton regulation, cell motility, cell cycle progression, apoptosis or proliferation. Acts as a downstream effector of the small GTPases CDC42 and RAC1. Activation by the binding of active CDC42 and RAC1 results in a conformational change and a subsequent autophosphorylation on several serine and/or threonine residues. Full-length PAK2 stimulates cell survival and cell growth. Phosphorylates MAPK4 and MAPK6 and activates the downstream target MAPKAPK5, a regulator of F-actin polymerization and cell migration. Phosphorylates JUN and plays an important role in EGF-induced cell proliferation. Phosphorylates many other substrates including histone H4 to promote assembly of H3.3 and H4 into nucleosomes, BAD, ribosomal protein S6, or MBP. Phosphorylates CASP7, thereby preventing its activity. Additionally, associates with ARHGEF7 and GIT1 to perform kinase-independent functions such as spindle orientation control during mitosis. On the other hand, apoptotic stimuli such as DNA damage lead to caspase-mediated cleavage of PAK2, generating PAK-2p34, an active p34 fragment that translocates to the nucleus and promotes cellular apoptosis involving the JNK signaling pathway. Caspase-activated PAK2 phosphorylates MKNK1 and reduces cellular translation. This chain is Serine/threonine-protein kinase PAK 2 (PAK2), found in Oryctolagus cuniculus (Rabbit).